A 746-amino-acid chain; its full sequence is Ferrienterobactin receptor (746 aa).

Residues 1–22 form the signal peptide; sequence MNKKIHSLALLVNLGIYGVAQA. Residues 34 to 41 carry the TonB box motif; the sequence is DTIVVTAA. The TBDR plug domain maps to 42–169; sequence EQNLQAPGVS…AGGVVNIITK (128 aa). The interval 76–96 is disordered; it reads GVNLTGNSTSGQRGNNRQIDI. Residues 79–93 show a composition bias toward polar residues; that stretch reads LTGNSTSGQRGNNRQ. The TBDR beta-barrel domain maps to 174 to 746; sequence EWHGSWDAYF…TWYMSVNTHF (573 aa). The short motif at 729–746 is the TonB C-terminal box element; it reads YTYNEPGRTWYMSVNTHF.

It belongs to the TonB-dependent receptor family.

The protein resides in the cell outer membrane. Functionally, this protein is involved in the initial step of iron uptake by binding ferrienterobactin (Fe-ENT), an iron chelatin siderophore that allows E.coli to extract iron from the environment. FepA also acts as a receptor for colicins B and D. The sequence is that of Ferrienterobactin receptor (fepA) from Escherichia coli (strain K12).